The primary structure comprises 1390 residues: DNA-directed RNA polymerase subunit beta'' (1390 aa).

Residues Cys224, Cys294, Cys301, and Cys304 each contribute to the Zn(2+) site.

This sequence belongs to the RNA polymerase beta' chain family. RpoC2 subfamily. In terms of assembly, in plastids the minimal PEP RNA polymerase catalytic core is composed of four subunits: alpha, beta, beta', and beta''. When a (nuclear-encoded) sigma factor is associated with the core the holoenzyme is formed, which can initiate transcription. Requires Zn(2+) as cofactor.

Its subcellular location is the plastid. The protein resides in the chloroplast. The enzyme catalyses RNA(n) + a ribonucleoside 5'-triphosphate = RNA(n+1) + diphosphate. Its function is as follows. DNA-dependent RNA polymerase catalyzes the transcription of DNA into RNA using the four ribonucleoside triphosphates as substrates. The sequence is that of DNA-directed RNA polymerase subunit beta'' from Ceratophyllum demersum (Rigid hornwort).